Reading from the N-terminus, the 2034-residue chain is Pecanex-like protein 3 (2034 aa).

A run of 2 helical transmembrane segments spans residues 33–53 (CFHL…YMVL) and 54–74 (PPSL…FATI). Positions 96-118 (STMGELEEEPAQGDSNPPRDPGV) are disordered. Phosphoserine is present on Ser127. Residue Thr129 is modified to Phosphothreonine. 3 disordered regions span residues 193-242 (IGDL…PLLK), 260-517 (DRAL…LRPP), and 540-625 (VLPA…SHSR). Over residues 294–303 (KAGSSDSCFS) the composition is skewed to polar residues. Residues 305-319 (TDRETLSSFKSEKTN) show a composition bias toward basic and acidic residues. Asn319 carries N-linked (GlcNAc...) asparagine glycosylation. Position 370 is a phosphothreonine (Thr370). Basic residues predominate over residues 391–409 (PSKRQPPLRRHSPPGRAPR). Phosphoserine is present on residues Ser392 and Ser431. Polar residues predominate over residues 427-436 (GSELSPASSL). Residues 444–460 (TDSSSSTSCYSPESSRG) show a composition bias toward low complexity. A compositionally biased stretch (polar residues) spans 488 to 497 (TQRTPSTASA). Residue Ser505 is modified to Phosphoserine. The next 7 helical transmembrane spans lie at 790–812 (VLEN…LLLL), 819–836 (IWVF…YSLL), 852–872 (WVIA…IWLL), 880–900 (PFPP…FFCA), 903–923 (VATV…LPQV), 946–968 (SPLT…YGFC), and 980–1000 (HVPV…YHLS). Ser1025 carries the phosphoserine modification. A run of 4 helical transmembrane segments spans residues 1053–1073 (LVMC…TVFI), 1078–1098 (VLGF…HYLL), 1244–1264 (FVLT…HAFA), and 1280–1300 (LLSG…VFIM). Phosphoserine is present on Ser1697. Asn1770 is a glycosylation site (N-linked (GlcNAc...) asparagine). The tract at residues 1844–2034 (GGLTSLSNNP…AAQPLLEHQY (191 aa)) is disordered. A compositionally biased stretch (pro residues) spans 1890–1910 (RPPPLLQWPPPRLPGPPPASP). Ser1909 is modified (phosphoserine). Residues 1925-1939 (GLLSSEGPSGKWSLG) show a composition bias toward low complexity. Ser1955 carries the post-translational modification Phosphoserine. A compositionally biased stretch (low complexity) spans 1969 to 1978 (LSLSLSLSLS).

This sequence belongs to the pecanex family.

It localises to the membrane. In Homo sapiens (Human), this protein is Pecanex-like protein 3.